The sequence spans 156 residues: ATP synthase subunit b (156 aa).

A helical membrane pass occupies residues 7–27 (IFFQMLVFFVLGWFTMKFVWP).

This sequence belongs to the ATPase B chain family. In terms of assembly, F-type ATPases have 2 components, F(1) - the catalytic core - and F(0) - the membrane proton channel. F(1) has five subunits: alpha(3), beta(3), gamma(1), delta(1), epsilon(1). F(0) has three main subunits: a(1), b(2) and c(10-14). The alpha and beta chains form an alternating ring which encloses part of the gamma chain. F(1) is attached to F(0) by a central stalk formed by the gamma and epsilon chains, while a peripheral stalk is formed by the delta and b chains.

Its subcellular location is the cell inner membrane. F(1)F(0) ATP synthase produces ATP from ADP in the presence of a proton or sodium gradient. F-type ATPases consist of two structural domains, F(1) containing the extramembraneous catalytic core and F(0) containing the membrane proton channel, linked together by a central stalk and a peripheral stalk. During catalysis, ATP synthesis in the catalytic domain of F(1) is coupled via a rotary mechanism of the central stalk subunits to proton translocation. Its function is as follows. Component of the F(0) channel, it forms part of the peripheral stalk, linking F(1) to F(0). The chain is ATP synthase subunit b from Bordetella pertussis (strain Tohama I / ATCC BAA-589 / NCTC 13251).